The primary structure comprises 53 residues: Collagen alpha-1(I) chain (53 aa).

The segment at 1–53 (SYGYBZKSAGVSVPGPMGPSGPRGLPGPPGAPGPZGFZGPPGZPGZPGSSGPM) is disordered. Residue lysine 7 is modified to Allysine. At serine 8 the chain carries Phosphoserine. Over residues 10–23 (GVSVPGPMGPSGPR) the composition is skewed to low complexity. 6 positions are modified to 4-hydroxyproline: proline 26, proline 29, proline 32, proline 41, proline 44, and proline 47. Positions 34 to 53 (PZGFZGPPGZPGZPGSSGPM) are enriched in low complexity.

Belongs to the fibrillar collagen family. As to quaternary structure, trimers of one alpha 2(I) and two alpha 1(I) chains. Interacts with MRC2. Interacts with TRAM2. Interacts with MFAP4 in a Ca (2+)-dependent manner. Post-translationally, contains mostly 4-hydroxyproline. Proline residues at the third position of the tripeptide repeating unit (G-X-Y) are hydroxylated in some or all of the chains. In terms of processing, contains 3-hydroxyproline at a few sites. This modification occurs on the first proline residue in the sequence motif Gly-Pro-Hyp, where Hyp is 4-hydroxyproline. Lysine residues at the third position of the tripeptide repeating unit (G-X-Y) are 5-hydroxylated in some or all of the chains. Post-translationally, O-glycosylated on hydroxylated lysine residues. The O-linked glycan consists of a Glc-Gal disaccharide. As to expression, forms the fibrils of tendon, ligaments and bones. In bones the fibrils are mineralized with calcium hydroxyapatite.

It is found in the secreted. It localises to the extracellular space. The protein localises to the extracellular matrix. In terms of biological role, type I collagen is a member of group I collagen (fibrillar forming collagen). The sequence is that of Collagen alpha-1(I) chain (COL1A1) from Oryctolagus cuniculus (Rabbit).